Consider the following 343-residue polypeptide: Protein RecA (343 aa).

66-73 (GPESSGKT) lines the ATP pocket.

It belongs to the RecA family.

The protein resides in the cytoplasm. In terms of biological role, can catalyze the hydrolysis of ATP in the presence of single-stranded DNA, the ATP-dependent uptake of single-stranded DNA by duplex DNA, and the ATP-dependent hybridization of homologous single-stranded DNAs. It interacts with LexA causing its activation and leading to its autocatalytic cleavage. The sequence is that of Protein RecA from Nitrosomonas eutropha (strain DSM 101675 / C91 / Nm57).